The primary structure comprises 345 residues: S-adenosylmethionine:tRNA ribosyltransferase-isomerase (345 aa).

This sequence belongs to the QueA family. Monomer.

The protein resides in the cytoplasm. It catalyses the reaction 7-aminomethyl-7-carbaguanosine(34) in tRNA + S-adenosyl-L-methionine = epoxyqueuosine(34) in tRNA + adenine + L-methionine + 2 H(+). The protein operates within tRNA modification; tRNA-queuosine biosynthesis. Transfers and isomerizes the ribose moiety from AdoMet to the 7-aminomethyl group of 7-deazaguanine (preQ1-tRNA) to give epoxyqueuosine (oQ-tRNA). This chain is S-adenosylmethionine:tRNA ribosyltransferase-isomerase, found in Shewanella sp. (strain MR-7).